The sequence spans 445 residues: Phosphoglucosamine mutase (445 aa).

Serine 105 functions as the Phosphoserine intermediate in the catalytic mechanism. Mg(2+) contacts are provided by serine 105, aspartate 244, aspartate 246, and aspartate 248. Serine 105 carries the post-translational modification Phosphoserine.

The protein belongs to the phosphohexose mutase family. Requires Mg(2+) as cofactor. In terms of processing, activated by phosphorylation.

It catalyses the reaction alpha-D-glucosamine 1-phosphate = D-glucosamine 6-phosphate. Functionally, catalyzes the conversion of glucosamine-6-phosphate to glucosamine-1-phosphate. The sequence is that of Phosphoglucosamine mutase from Janthinobacterium sp. (strain Marseille) (Minibacterium massiliensis).